The chain runs to 744 residues: Endonuclease MutS2 (744 aa).

Position 315-322 (glycine 315–threonine 322) interacts with ATP. In terms of domain architecture, Smr spans valine 668–arginine 743.

Belongs to the DNA mismatch repair MutS family. MutS2 subfamily. Homodimer. Interacts with MutL. Binds to stalled ribosomes, contacting rRNA.

Its activity is regulated as follows. Nuclease activity is stimulated by interaction with MutL. ATPase activity is stimulated by dsDNA. Endonuclease that is involved in the suppression of homologous recombination and may thus have a key role in the control of bacterial genetic diversity. Cleaves the phosphate backbone of oligodeoxynucleotides non-sequence-specifically at the 3' side of the phosphates. Preferably incises the branched DNA structures, especially the D-loop structure over the Holliday junction. Has ATPase activity. Binds to dsDNA but not to ssDNA. Functionally, acts as a ribosome collision sensor, splitting the ribosome into its 2 subunits. Detects stalled/collided 70S ribosomes which it binds and splits by an ATP-hydrolysis driven conformational change. Acts upstream of the ribosome quality control system (RQC), a ribosome-associated complex that mediates the extraction of incompletely synthesized nascent chains from stalled ribosomes and their subsequent degradation. Probably generates substrates for RQC. This Thermus thermophilus (strain ATCC 27634 / DSM 579 / HB8) protein is Endonuclease MutS2.